Reading from the N-terminus, the 96-residue chain is Pyrimidine/purine nucleoside phosphorylase (96 aa).

This sequence belongs to the nucleoside phosphorylase PpnP family.

It catalyses the reaction a purine D-ribonucleoside + phosphate = a purine nucleobase + alpha-D-ribose 1-phosphate. It carries out the reaction adenosine + phosphate = alpha-D-ribose 1-phosphate + adenine. The enzyme catalyses cytidine + phosphate = cytosine + alpha-D-ribose 1-phosphate. The catalysed reaction is guanosine + phosphate = alpha-D-ribose 1-phosphate + guanine. It catalyses the reaction inosine + phosphate = alpha-D-ribose 1-phosphate + hypoxanthine. It carries out the reaction thymidine + phosphate = 2-deoxy-alpha-D-ribose 1-phosphate + thymine. The enzyme catalyses uridine + phosphate = alpha-D-ribose 1-phosphate + uracil. The catalysed reaction is xanthosine + phosphate = alpha-D-ribose 1-phosphate + xanthine. Functionally, catalyzes the phosphorolysis of diverse nucleosides, yielding D-ribose 1-phosphate and the respective free bases. Can use uridine, adenosine, guanosine, cytidine, thymidine, inosine and xanthosine as substrates. Also catalyzes the reverse reactions. This Erwinia tasmaniensis (strain DSM 17950 / CFBP 7177 / CIP 109463 / NCPPB 4357 / Et1/99) protein is Pyrimidine/purine nucleoside phosphorylase.